The following is a 343-amino-acid chain: Glycerol-3-phosphate dehydrogenase [NAD(P)+] (343 aa).

Residues Trp29, Arg49, and Lys122 each contribute to the NADPH site. Positions 122, 150, and 152 each coordinate sn-glycerol 3-phosphate. Ala154 provides a ligand contact to NADPH. Residues Lys205, Asp258, Ser268, Arg269, and Asn270 each coordinate sn-glycerol 3-phosphate. Lys205 functions as the Proton acceptor in the catalytic mechanism. Arg269 provides a ligand contact to NADPH. Positions 288 and 290 each coordinate NADPH.

Belongs to the NAD-dependent glycerol-3-phosphate dehydrogenase family.

Its subcellular location is the cytoplasm. It carries out the reaction sn-glycerol 3-phosphate + NAD(+) = dihydroxyacetone phosphate + NADH + H(+). The enzyme catalyses sn-glycerol 3-phosphate + NADP(+) = dihydroxyacetone phosphate + NADPH + H(+). It participates in membrane lipid metabolism; glycerophospholipid metabolism. In terms of biological role, catalyzes the reduction of the glycolytic intermediate dihydroxyacetone phosphate (DHAP) to sn-glycerol 3-phosphate (G3P), the key precursor for phospholipid synthesis. This chain is Glycerol-3-phosphate dehydrogenase [NAD(P)+], found in Mesorhizobium japonicum (strain LMG 29417 / CECT 9101 / MAFF 303099) (Mesorhizobium loti (strain MAFF 303099)).